We begin with the raw amino-acid sequence, 267 residues long: Putative carbamate hydrolase RutD (267 aa).

The region spanning 14 to 115 (PVMVMISGLG…SALVIINGWL (102 aa)) is the AB hydrolase-1 domain.

This sequence belongs to the AB hydrolase superfamily. Hydrolase RutD family.

It carries out the reaction carbamate + 2 H(+) = NH4(+) + CO2. In terms of biological role, involved in pyrimidine catabolism. May facilitate the hydrolysis of carbamate, a reaction that can also occur spontaneously. This is Putative carbamate hydrolase RutD from Cronobacter turicensis (strain DSM 18703 / CCUG 55852 / LMG 23827 / z3032).